The chain runs to 413 residues: Serine hydroxymethyltransferase (413 aa).

(6S)-5,6,7,8-tetrahydrofolate-binding positions include L117 and 121–123 (GHL). Residue K226 is modified to N6-(pyridoxal phosphate)lysine. 349–351 (SPF) lines the (6S)-5,6,7,8-tetrahydrofolate pocket.

This sequence belongs to the SHMT family. Homodimer. Pyridoxal 5'-phosphate serves as cofactor.

It is found in the cytoplasm. The catalysed reaction is (6R)-5,10-methylene-5,6,7,8-tetrahydrofolate + glycine + H2O = (6S)-5,6,7,8-tetrahydrofolate + L-serine. It participates in one-carbon metabolism; tetrahydrofolate interconversion. Its pathway is amino-acid biosynthesis; glycine biosynthesis; glycine from L-serine: step 1/1. Catalyzes the reversible interconversion of serine and glycine with tetrahydrofolate (THF) serving as the one-carbon carrier. This reaction serves as the major source of one-carbon groups required for the biosynthesis of purines, thymidylate, methionine, and other important biomolecules. Also exhibits THF-independent aldolase activity toward beta-hydroxyamino acids, producing glycine and aldehydes, via a retro-aldol mechanism. The sequence is that of Serine hydroxymethyltransferase from Listeria monocytogenes serotype 4b (strain F2365).